A 207-amino-acid polypeptide reads, in one-letter code: NADH-ubiquinone oxidoreductase chain 6 (207 aa).

5 consecutive transmembrane segments (helical) span residues 1–21 (MDFL…LVIQ), 28–48 (SVLF…LLGL), 50–70 (FFAL…FLFV), 88–108 (YLPV…ILID), and 158–178 (FYFF…AIVL).

Belongs to the complex I subunit 6 family.

Its subcellular location is the mitochondrion membrane. The enzyme catalyses a ubiquinone + NADH + 5 H(+)(in) = a ubiquinol + NAD(+) + 4 H(+)(out). Its function is as follows. Core subunit of the mitochondrial membrane respiratory chain NADH dehydrogenase (Complex I) that is believed to belong to the minimal assembly required for catalysis. Complex I functions in the transfer of electrons from NADH to the respiratory chain. The immediate electron acceptor for the enzyme is believed to be ubiquinone. This is NADH-ubiquinone oxidoreductase chain 6 (ND6) from Prototheca wickerhamii.